We begin with the raw amino-acid sequence, 483 residues long: Altronate oxidoreductase (483 aa).

Residue 18 to 29 (IIQFGEGNFLRA) coordinates NAD(+).

This sequence belongs to the mannitol dehydrogenase family. UxaB subfamily.

The catalysed reaction is D-altronate + NAD(+) = keto-D-tagaturonate + NADH + H(+). It participates in carbohydrate metabolism; pentose and glucuronate interconversion. In Enterobacter sp. (strain 638), this protein is Altronate oxidoreductase.